The following is a 269-amino-acid chain: NAD-capped RNA hydrolase NudC (269 aa).

Arg81 serves as a coordination point for substrate. Zn(2+)-binding residues include Cys110, Cys113, Cys128, and Cys131. Tyr136 contacts substrate. One can recognise a Nudix hydrolase domain in the interval 137 to 260 (PRIFPCIIVA…TIARALIEQT (124 aa)). Ala170, Glu186, and Glu190 together coordinate a divalent metal cation. The short motif at 171–192 (GFVEVGETLEQCVAREVLEETG) is the Nudix box element. 204-211 (QPWAFPSS) is a substrate binding site. Glu231 contributes to the a divalent metal cation binding site. Ala253 serves as a coordination point for substrate.

Belongs to the Nudix hydrolase family. NudC subfamily. As to quaternary structure, homodimer. Requires Mg(2+) as cofactor. It depends on Mn(2+) as a cofactor. Zn(2+) serves as cofactor.

It catalyses the reaction a 5'-end NAD(+)-phospho-ribonucleoside in mRNA + H2O = a 5'-end phospho-adenosine-phospho-ribonucleoside in mRNA + beta-nicotinamide D-ribonucleotide + 2 H(+). It carries out the reaction NAD(+) + H2O = beta-nicotinamide D-ribonucleotide + AMP + 2 H(+). The enzyme catalyses NADH + H2O = reduced beta-nicotinamide D-ribonucleotide + AMP + 2 H(+). MRNA decapping enzyme that specifically removes the nicotinamide adenine dinucleotide (NAD) cap from a subset of mRNAs by hydrolyzing the diphosphate linkage to produce nicotinamide mononucleotide (NMN) and 5' monophosphate mRNA. The NAD-cap is present at the 5'-end of some mRNAs and stabilizes RNA against 5'-processing. Has preference for mRNAs with a 5'-end purine. Catalyzes the hydrolysis of a broad range of dinucleotide pyrophosphates. This is NAD-capped RNA hydrolase NudC from Vibrio cholerae serotype O1 (strain ATCC 39315 / El Tor Inaba N16961).